Reading from the N-terminus, the 41-residue chain is Inducible serine protease inhibitor 3 (41 aa).

Inhibits trypsin and the toxin proteases PR1 and PR2 of M.anisopliae. Does not inhibit chymotrypsin, subtilisin Carlsberg, proteinase K and porcine pancreatic elastase. The protein is Inducible serine protease inhibitor 3 of Galleria mellonella (Greater wax moth).